The primary structure comprises 213 residues: Ribonuclease HII (213 aa).

An RNase H type-2 domain is found at 27-213 (HAVAGVDEAG…FRGVKEHVAP (187 aa)). Asp-33, Glu-34, and Asp-125 together coordinate a divalent metal cation.

Belongs to the RNase HII family. Mn(2+) is required as a cofactor. Mg(2+) serves as cofactor.

The protein resides in the cytoplasm. The enzyme catalyses Endonucleolytic cleavage to 5'-phosphomonoester.. Functionally, endonuclease that specifically degrades the RNA of RNA-DNA hybrids. The chain is Ribonuclease HII from Geobacter metallireducens (strain ATCC 53774 / DSM 7210 / GS-15).